We begin with the raw amino-acid sequence, 275 residues long: Glutamate racemase (275 aa).

Residues 12–13 (DS) and 44–45 (YG) contribute to the substrate site. The active-site Proton donor/acceptor is cysteine 75. Position 76–77 (76–77 (NT)) interacts with substrate. The active-site Proton donor/acceptor is the cysteine 185. 186 to 187 (TH) provides a ligand contact to substrate.

Belongs to the aspartate/glutamate racemases family.

It carries out the reaction L-glutamate = D-glutamate. It participates in cell wall biogenesis; peptidoglycan biosynthesis. In terms of biological role, provides the (R)-glutamate required for cell wall biosynthesis. The chain is Glutamate racemase from Mycolicibacterium paratuberculosis (strain ATCC BAA-968 / K-10) (Mycobacterium paratuberculosis).